Reading from the N-terminus, the 177-residue chain is Peptide methionine sulfoxide reductase MsrA 2 (177 aa).

Cys12 is an active-site residue.

This sequence belongs to the MsrA Met sulfoxide reductase family.

It catalyses the reaction L-methionyl-[protein] + [thioredoxin]-disulfide + H2O = L-methionyl-(S)-S-oxide-[protein] + [thioredoxin]-dithiol. The catalysed reaction is [thioredoxin]-disulfide + L-methionine + H2O = L-methionine (S)-S-oxide + [thioredoxin]-dithiol. In terms of biological role, has an important function as a repair enzyme for proteins that have been inactivated by oxidation. Catalyzes the reversible oxidation-reduction of methionine sulfoxide in proteins to methionine. The chain is Peptide methionine sulfoxide reductase MsrA 2 (msrA2) from Staphylococcus aureus (strain NCTC 8325 / PS 47).